Reading from the N-terminus, the 331-residue chain is Rho GTPase-activating protein 5 (331 aa).

Residues 3-16 form the CRIB domain; it reads IGGPTNIRHVAHVT. The region spanning 48–225 is the Rho-GAP domain; it reads VSTESMQLSY…LLKSLTEKTV (178 aa). Basic and acidic residues predominate over residues 227-251; it reads EREASSSVVDRRCSKEAEDGEKEKD. The interval 227 to 331 is disordered; that stretch reads EREASSSVVD…VQPPICSSNP (105 aa). Acidic residues predominate over residues 252-277; the sequence is NEEEEEDEEEEEEEEDEDEDEEEEGD.

As to expression, expressed in differentiating xylem cells.

Its subcellular location is the cell membrane. Acts as a GTPase activator for the Rac-type GTPase by converting it to an inactive GDP-bound state. In Arabidopsis thaliana (Mouse-ear cress), this protein is Rho GTPase-activating protein 5 (ROPGAP5).